A 130-amino-acid polypeptide reads, in one-letter code: Large ribosomal subunit protein bL12 (130 aa).

This sequence belongs to the bacterial ribosomal protein bL12 family. In terms of assembly, homodimer. Part of the ribosomal stalk of the 50S ribosomal subunit. Forms a multimeric L10(L12)X complex, where L10 forms an elongated spine to which 2 to 4 L12 dimers bind in a sequential fashion. Binds GTP-bound translation factors.

Forms part of the ribosomal stalk which helps the ribosome interact with GTP-bound translation factors. Is thus essential for accurate translation. The sequence is that of Large ribosomal subunit protein bL12 from Synechococcus sp. (strain RCC307).